We begin with the raw amino-acid sequence, 892 residues long: Translation initiation factor IF-2 (892 aa).

The segment at 88-304 is disordered; it reads KKRTFVKRDP…SSLQQGFQKP (217 aa). Composition is skewed to basic and acidic residues over residues 93–159 and 166–216; these read VKRD…KDKV and DMTK…EENK. The span at 254–269 shows a compositional bias: basic residues; that stretch reads GRGRNAKAARPAKKGK. Residues 270-282 show a composition bias toward basic and acidic residues; sequence HAESKADREEARA. One can recognise a tr-type G domain in the interval 391 to 560; that stretch reads PRAPVVTIMG…LLQAEVLELK (170 aa). The G1 stretch occupies residues 400-407; the sequence is GHVDHGKT. GTP is bound at residue 400 to 407; that stretch reads GHVDHGKT. The interval 425 to 429 is G2; that stretch reads GITQH. The G3 stretch occupies residues 446–449; it reads DTPG. Residues 446-450 and 500-503 contribute to the GTP site; these read DTPGH and NKID. The segment at 500 to 503 is G4; sequence NKID. Residues 536-538 are G5; the sequence is SAK.

Belongs to the TRAFAC class translation factor GTPase superfamily. Classic translation factor GTPase family. IF-2 subfamily.

It is found in the cytoplasm. One of the essential components for the initiation of protein synthesis. Protects formylmethionyl-tRNA from spontaneous hydrolysis and promotes its binding to the 30S ribosomal subunits. Also involved in the hydrolysis of GTP during the formation of the 70S ribosomal complex. This Salmonella choleraesuis (strain SC-B67) protein is Translation initiation factor IF-2.